We begin with the raw amino-acid sequence, 189 residues long: Holliday junction branch migration complex subunit RuvA (189 aa).

Residues 1-62 (MIVALKGNIE…EEAWSLYGFA (62 aa)) are domain I. The interval 63–138 (EEAEKRVFDT…FSLSLQEGSK (76 aa)) is domain II. The interval 138 to 139 (KA) is flexible linker. The domain III stretch occupies residues 140–189 (STPPVFEESRLALESLGFKSELIAKALQNIQATTTQEIIKEALKKLQTLR).

This sequence belongs to the RuvA family. In terms of assembly, homotetramer. Forms an RuvA(8)-RuvB(12)-Holliday junction (HJ) complex. HJ DNA is sandwiched between 2 RuvA tetramers; dsDNA enters through RuvA and exits via RuvB. An RuvB hexamer assembles on each DNA strand where it exits the tetramer. Each RuvB hexamer is contacted by two RuvA subunits (via domain III) on 2 adjacent RuvB subunits; this complex drives branch migration. In the full resolvosome a probable DNA-RuvA(4)-RuvB(12)-RuvC(2) complex forms which resolves the HJ.

The protein localises to the cytoplasm. The RuvA-RuvB-RuvC complex processes Holliday junction (HJ) DNA during genetic recombination and DNA repair, while the RuvA-RuvB complex plays an important role in the rescue of blocked DNA replication forks via replication fork reversal (RFR). RuvA specifically binds to HJ cruciform DNA, conferring on it an open structure. The RuvB hexamer acts as an ATP-dependent pump, pulling dsDNA into and through the RuvAB complex. HJ branch migration allows RuvC to scan DNA until it finds its consensus sequence, where it cleaves and resolves the cruciform DNA. This chain is Holliday junction branch migration complex subunit RuvA, found in Wolinella succinogenes (strain ATCC 29543 / DSM 1740 / CCUG 13145 / JCM 31913 / LMG 7466 / NCTC 11488 / FDC 602W) (Vibrio succinogenes).